Consider the following 197-residue polypeptide: UPF0314 protein R03235 (197 aa).

The next 2 helical transmembrane spans lie at A16 to M36 and L152 to V172.

It belongs to the UPF0314 family.

Its subcellular location is the cell membrane. The polypeptide is UPF0314 protein R03235 (Rhizobium meliloti (strain 1021) (Ensifer meliloti)).